The primary structure comprises 492 residues: N-succinylglutamate 5-semialdehyde dehydrogenase (492 aa).

220–225 (GSANTG) provides a ligand contact to NAD(+). Residues E243 and C277 contribute to the active site.

This sequence belongs to the aldehyde dehydrogenase family. AstD subfamily.

The enzyme catalyses N-succinyl-L-glutamate 5-semialdehyde + NAD(+) + H2O = N-succinyl-L-glutamate + NADH + 2 H(+). It participates in amino-acid degradation; L-arginine degradation via AST pathway; L-glutamate and succinate from L-arginine: step 4/5. Functionally, catalyzes the NAD-dependent reduction of succinylglutamate semialdehyde into succinylglutamate. This Escherichia coli O9:H4 (strain HS) protein is N-succinylglutamate 5-semialdehyde dehydrogenase.